A 335-amino-acid polypeptide reads, in one-letter code: GTPase Obg (335 aa).

An Obg domain is found at Met1–Ile158. The OBG-type G domain maps to Ala159–Ser334. Residues Gly165 to Ser172, Phe190 to His194, Asp215 to Gly218, Asn285 to Asp288, and Ser315 to Leu317 contribute to the GTP site. Residues Ser172 and Thr192 each contribute to the Mg(2+) site.

It belongs to the TRAFAC class OBG-HflX-like GTPase superfamily. OBG GTPase family. Monomer. Mg(2+) is required as a cofactor.

The protein localises to the cytoplasm. Functionally, an essential GTPase which binds GTP, GDP and possibly (p)ppGpp with moderate affinity, with high nucleotide exchange rates and a fairly low GTP hydrolysis rate. Plays a role in control of the cell cycle, stress response, ribosome biogenesis and in those bacteria that undergo differentiation, in morphogenesis control. This is GTPase Obg from Chlamydia trachomatis serovar L2 (strain ATCC VR-902B / DSM 19102 / 434/Bu).